A 160-amino-acid chain; its full sequence is Phosphopantetheine adenylyltransferase (160 aa).

Residue Ser9 participates in substrate binding. ATP is bound by residues 9–10 (SF) and His17. The substrate site is built by Lys41, Val73, and Lys87. Residues 88–90 (GLR), Glu98, and 122–128 (YSFVSSS) contribute to the ATP site.

The protein belongs to the bacterial CoaD family. As to quaternary structure, homohexamer. The cofactor is Mg(2+).

It localises to the cytoplasm. It carries out the reaction (R)-4'-phosphopantetheine + ATP + H(+) = 3'-dephospho-CoA + diphosphate. It functions in the pathway cofactor biosynthesis; coenzyme A biosynthesis; CoA from (R)-pantothenate: step 4/5. Reversibly transfers an adenylyl group from ATP to 4'-phosphopantetheine, yielding dephospho-CoA (dPCoA) and pyrophosphate. The sequence is that of Phosphopantetheine adenylyltransferase from Mycobacterium avium (strain 104).